The following is a 38-amino-acid chain: Defensin D7 (38 aa).

This sequence belongs to the DEFL family. Group IV subfamily. In terms of tissue distribution, distributed in the epidermal cell layer of leaves and in the subepidermal layer region of stems. Not in roots.

The protein resides in the secreted. The protein localises to the cell wall. In terms of biological role, antimicrobial peptide. Active against Fusarium spp., Gram-positive and Gram-negative bacterial pathogens. The protein is Defensin D7 of Spinacia oleracea (Spinach).